A 1775-amino-acid chain; its full sequence is Stereocilin (1775 aa).

The first 22 residues, 1-22 (MALSLWPLLLLLLLLLLLSFAV), serve as a signal peptide directing secretion. N-linked (GlcNAc...) asparagine glycosylation is found at Asn-65, Asn-202, Asn-297, Asn-366, Asn-427, Asn-476, Asn-540, Asn-565, Asn-656, Asn-824, Asn-916, Asn-964, Asn-1179, and Asn-1274.

It belongs to the stereocilin family.

It is found in the cell surface. The protein localises to the cell projection. It localises to the kinocilium. The protein resides in the stereocilium. Its function is as follows. Essential to the formation of horizontal top connectors between outer hair cell stereocilia. The sequence is that of Stereocilin (STRC) from Homo sapiens (Human).